Consider the following 1198-residue polypeptide: DNA polymerase (1198 aa).

Disordered regions lie at residues 1-87, 179-199, and 904-930; these read MALV…PRGT, LEQPDGQGQAAEVEDHQPNPP, and QLALADSDAEESEDERAPTPFYSPPSG. 2 stretches are compositionally biased toward low complexity: residues 30–40 and 57–68; these read QQPTRAAPAPA and APPTSGGSPASP.

This sequence belongs to the DNA polymerase type-B family. Heterodimer with the terminal protein; this heterodimer binds to bp 9 to 18 of the genome. Forms a complex with viral pTP, DBP and hosts NFIA and POU2F1/OCT1 for initiation of replication.

It localises to the host nucleus. The enzyme catalyses DNA(n) + a 2'-deoxyribonucleoside 5'-triphosphate = DNA(n+1) + diphosphate. Functionally, eukaryotic-type DNA polymerase involved in viral genomic replication. DNA synthesis is protein primed, and acts in a strand displacement replication. Assembles in complex with viral pTP, DBP, host NFIA and host POU2F1/OCT1 on viral origin of replication. The polymerase covalently transfers dCMP onto pTP, thereby initiating complementary strand synthesis. This is DNA polymerase from Homo sapiens (Human).